An 852-amino-acid chain; its full sequence is Eukaryotic translation initiation factor 3 subunit C (852 aa).

Positions 1–90 (MSRFFVSGYP…DSDSDDEGRK (90 aa)) are disordered. Over residues 14-57 (SSEEEDLLSSSEEELLSSESEEDNFSSDSEFGNDSDNDSSDSDS) the composition is skewed to acidic residues. The 176-residue stretch at 597 to 772 (FHMHINLELL…SFVNFTTNDH (176 aa)) folds into the PCI domain. A compositionally biased stretch (polar residues) spans 798–809 (TASNGYSRKQPM). The tract at residues 798–852 (TASNGYSRKQPMQQQQQQQQQQQQQKEQKELLHEENNRFRYANVNANNDEFQTTA) is disordered. The segment covering 810 to 822 (QQQQQQQQQQQQQ) has biased composition (low complexity). The span at 823–835 (KEQKELLHEENNR) shows a compositional bias: basic and acidic residues. Positions 841–852 (VNANNDEFQTTA) are enriched in polar residues.

The protein belongs to the eIF-3 subunit C family. As to quaternary structure, component of the eukaryotic translation initiation factor 3 (eIF-3) complex.

Its subcellular location is the cytoplasm. Component of the eukaryotic translation initiation factor 3 (eIF-3) complex, which is involved in protein synthesis of a specialized repertoire of mRNAs and, together with other initiation factors, stimulates binding of mRNA and methionyl-tRNAi to the 40S ribosome. The eIF-3 complex specifically targets and initiates translation of a subset of mRNAs involved in cell proliferation. The chain is Eukaryotic translation initiation factor 3 subunit C from Debaryomyces hansenii (strain ATCC 36239 / CBS 767 / BCRC 21394 / JCM 1990 / NBRC 0083 / IGC 2968) (Yeast).